A 463-amino-acid chain; its full sequence is Serine/threonine-protein kinase tricornered (463 aa).

Residues 93-394 enclose the Protein kinase domain; sequence FEALKVIGRG…LEDLKSVPFF (302 aa). ATP contacts are provided by residues 99–107 and lysine 122; that span reads IGRGAFGEV. Residues 119 to 180 are interaction with mats and Mob1; that stretch reads YAMKVLRKAD…EFLPGGDMMT (62 aa). Aspartate 216 acts as the Proton acceptor in catalysis. The residue at position 292 (serine 292) is a Phosphoserine. An AGC-kinase C-terminal domain is found at 395-463; sequence RGVDWEHIRE…YKRFEVRNLE (69 aa). Threonine 453 carries the post-translational modification Phosphothreonine.

The protein belongs to the protein kinase superfamily. AGC Ser/Thr protein kinase family. As to quaternary structure, interacts with, and is activated by, Mob1. It depends on Mg(2+) as a cofactor. In terms of tissue distribution, expressed in the peripheral and central nervous system (at protein level). Expressed in the wing imaginal disk.

The protein localises to the cytoplasm. The protein resides in the nucleus. The enzyme catalyses L-seryl-[protein] + ATP = O-phospho-L-seryl-[protein] + ADP + H(+). The catalysed reaction is L-threonyl-[protein] + ATP = O-phospho-L-threonyl-[protein] + ADP + H(+). With respect to regulation, activated by fry. In terms of biological role, serine/threonine-protein kinase involved in controlling cell structure and proliferation of a variety of polarized outgrowths including epidermal hairs, bristles, arista laterals, and dendrites. Together with fry, maintains the integrity of epidermal hairs and is an essential component of the signaling pathway regulating dendritic branching of sensory neurons. Reduces neurite outgrowth by phosphorylating pav, thereby inhibiting its function in microtubule-microtubule sliding. In Drosophila melanogaster (Fruit fly), this protein is Serine/threonine-protein kinase tricornered.